Reading from the N-terminus, the 256-residue chain is Kallikrein 1-related peptidase-like b4 (256 aa).

Residues 1-17 (MWFLILFLALSLGGIDA) form the signal peptide. The interval 18-24 (APPVQSQ) is activation peptide homolog. Residues 18–253 (APPVQSQVDC…FSSWIRETMA (236 aa)) form the Peptidase S1 domain. A disulfide bond links Cys45 and Cys61. Zn(2+) contacts are provided by Glu77 and His84. 3 disulfides stabilise this stretch: Cys147–Cys214, Cys179–Cys193, and Cys204–Cys229.

It belongs to the peptidase S1 family. Kallikrein subfamily. As to quaternary structure, 7S nerve growth factor is composed of two alpha chains, a beta dimer composed of identical chains, and two gamma chains. Zn(2+) is required as a cofactor. In terms of processing, the presence of Gln-24 prevents cleavage of the activation peptide, which remains attached at the amino end of the mature alpha chain.

In Mus musculus (Mouse), this protein is Kallikrein 1-related peptidase-like b4 (Klk1b4).